Reading from the N-terminus, the 144-residue chain is Vasopressin-neurophysin 2-copeptin (144 aa).

A disulfide bond links Cys1 and Cys6. Gly9 bears the Glycine amide mark. 7 disulfides stabilise this stretch: Cys22–Cys66, Cys25–Cys39, Cys33–Cys56, Cys40–Cys46, Cys73–Cys85, Cys79–Cys97, and Cys86–Cys91. The N-linked (GlcNAc...) asparagine glycan is linked to Asn112.

The protein belongs to the vasopressin/oxytocin family. As to quaternary structure, interacts with vasopressin receptors V1bR/AVPR1B (Ki=85 pM), V1aR/AVPR1A (Ki=0.6 nM) and V2R/AVPR2 (Ki=4.9 nM). Interacts with oxytocin receptor (OXTR) (Ki=110 nM).

The protein localises to the secreted. Its function is as follows. Neurophysin 2 specifically binds vasopressin. Vasopressin has a direct antidiuretic action on the kidney, it also causes vasoconstriction of the peripheral vessels. Acts by binding to vasopressin receptors (V1bR/AVPR1B, V1aR/AVPR1A, and V2R/AVPR2). The chain is Vasopressin-neurophysin 2-copeptin (AVP) from Cavia porcellus (Guinea pig).